We begin with the raw amino-acid sequence, 309 residues long: Vacuolar membrane protein YOR292C (309 aa).

The Vacuolar portion of the chain corresponds to 1-52 (MPLQLFGRDQIVVHYDNGNMSNDDQNHQSVLGSWTRRAAAALRTLMNKRIQR). The N-linked (GlcNAc...) asparagine glycan is linked to asparagine 19. A helical membrane pass occupies residues 53-73 (ITLTHWLLLVIWVTSLWKFTS). Residues 74–81 (HYRQLYAN) lie on the Cytoplasmic side of the membrane. A helical membrane pass occupies residues 82 to 102 (SAVFATLCTNILLFGISDILA). Residues 103–183 (QSIACFYSYH…KTDTFDFFRW (81 aa)) are Vacuolar-facing. An N-linked (GlcNAc...) asparagine glycan is attached at asparagine 121. Residues 184-204 (GCFMFWGFFISFFQAPWYKFL) traverse the membrane as a helical segment. Residues 205-225 (NFFYTEDPTVVQVFERVLSDQ) are Cytoplasmic-facing. A helical membrane pass occupies residues 226–246 (LLYSPISLYCFFMFSNYVMEG). Residues 247–260 (GDKDTLGKKIQRLY) are Vacuolar-facing. A helical transmembrane segment spans residues 261–281 (ISTLGCNYLVWPMVQFINFLI). The Cytoplasmic portion of the chain corresponds to 282–309 (MPRDFQAPFSSSVGVVWNCFLSMRNASK).

Belongs to the peroxisomal membrane protein PXMP2/4 family. N-glycosylated.

It localises to the vacuole membrane. The sequence is that of Vacuolar membrane protein YOR292C from Saccharomyces cerevisiae (strain ATCC 204508 / S288c) (Baker's yeast).